The chain runs to 241 residues: tRNA (guanine-N(7)-)-methyltransferase (241 aa).

Residues 1–20 are disordered; sequence MTESNDTPIQPEAGDERQHR. S-adenosyl-L-methionine contacts are provided by Glu71, Glu96, Asp123, and Asp146. Asp146 is a catalytic residue. Substrate-binding positions include Lys150, Asp182, and 219 to 222; that span reads TKFE.

This sequence belongs to the class I-like SAM-binding methyltransferase superfamily. TrmB family.

It catalyses the reaction guanosine(46) in tRNA + S-adenosyl-L-methionine = N(7)-methylguanosine(46) in tRNA + S-adenosyl-L-homocysteine. It functions in the pathway tRNA modification; N(7)-methylguanine-tRNA biosynthesis. Its function is as follows. Catalyzes the formation of N(7)-methylguanine at position 46 (m7G46) in tRNA. The sequence is that of tRNA (guanine-N(7)-)-methyltransferase from Pseudomonas fluorescens (strain ATCC BAA-477 / NRRL B-23932 / Pf-5).